A 299-amino-acid chain; its full sequence is Dye-decolorizing peroxidase YfeX (299 aa).

Aspartate 143 acts as the Proton acceptor in catalysis. Position 215 (histidine 215) interacts with heme.

Belongs to the DyP-type peroxidase family. Heme b is required as a cofactor.

It is found in the cytoplasm. Functionally, has both general peroxidase activity and dye-decolorizing activity. Can catalyze the oxidation of both protoporphyrinogen IX and coproporphyrinogen III to their corresponding porphyrins. Also efficiently decolorizes the dyes alizarin red and Cibacron blue F3GA. This Escherichia coli (strain K12) protein is Dye-decolorizing peroxidase YfeX (yfeX).